The chain runs to 37 residues: U12-myrmicitoxin-Mri1a (37 aa).

An N-terminal signal peptide occupies residues Met1–Gly23. A propeptide spanning residues Asp24–Pro25 is cleaved from the precursor. Val35 carries the valine amide modification.

Expressed by the venom gland.

It is found in the secreted. Toxin that induces mild paralysis, and reduces survival and reproduction when injected into aphids (A.pisum). May affect various processes in the aphid, including wound healing and hemolymph coagulation. It does not increase the sensitivity of the aphids to the chemical insecticides imidacloprid, methomyl and Spirotetramat. Has no insecticidal activity when injected into blowfly (L.caesar). Does not display any antibacterial or antifungal activity. This is U12-myrmicitoxin-Mri1a from Manica rubida (European giant red ant).